We begin with the raw amino-acid sequence, 128 residues long: Probable soluble cytochrome b562 2 (128 aa).

The signal sequence occupies residues 1–22 (MGKTLMALITAALLSTSSLVMA). Heme b-binding residues include M29 and H124.

This sequence belongs to the cytochrome b562 family. Heme b is required as a cofactor.

The protein resides in the periplasm. Functionally, electron-transport protein of unknown function. The chain is Probable soluble cytochrome b562 2 (cybC2) from Yersinia pestis.